The sequence spans 72 residues: Translation initiation factor IF-1 (72 aa).

Positions 1-72 constitute an S1-like domain; that stretch reads MAKDDVIEVE…TRGRITYRYK (72 aa). Y60 carries the phosphotyrosine modification.

Belongs to the IF-1 family. As to quaternary structure, component of the 30S ribosomal translation pre-initiation complex which assembles on the 30S ribosome in the order IF-2 and IF-3, IF-1 and N-formylmethionyl-tRNA(fMet); mRNA recruitment can occur at any time during PIC assembly.

It localises to the cytoplasm. Its function is as follows. One of the essential components for the initiation of protein synthesis. Stabilizes the binding of IF-2 and IF-3 on the 30S subunit to which N-formylmethionyl-tRNA(fMet) subsequently binds. Helps modulate mRNA selection, yielding the 30S pre-initiation complex (PIC). Upon addition of the 50S ribosomal subunit IF-1, IF-2 and IF-3 are released leaving the mature 70S translation initiation complex. The polypeptide is Translation initiation factor IF-1 (Geobacillus kaustophilus (strain HTA426)).